A 91-amino-acid polypeptide reads, in one-letter code: Small ribosomal subunit protein uS19 (91 aa).

The protein belongs to the universal ribosomal protein uS19 family.

In terms of biological role, protein S19 forms a complex with S13 that binds strongly to the 16S ribosomal RNA. The sequence is that of Small ribosomal subunit protein uS19 from Pseudomonas syringae pv. tomato (strain ATCC BAA-871 / DC3000).